Here is a 112-residue protein sequence, read N- to C-terminus: Urease subunit beta (112 aa).

It belongs to the urease beta subunit family. In terms of assembly, heterotrimer of UreA (gamma), UreB (beta) and UreC (alpha) subunits. Three heterotrimers associate to form the active enzyme.

The protein localises to the cytoplasm. It catalyses the reaction urea + 2 H2O + H(+) = hydrogencarbonate + 2 NH4(+). Its pathway is nitrogen metabolism; urea degradation; CO(2) and NH(3) from urea (urease route): step 1/1. This is Urease subunit beta from Polaromonas sp. (strain JS666 / ATCC BAA-500).